The primary structure comprises 328 residues: MTQRVVSIVGPTASGKTGLGIAIARRLAEAGERAEIVNADAYQMYRGMDIGTAKPTAEEQAVVSHHLIDIIDPEDTMSVARFQQLARETIADLQSRGIRPILVGGSGLYARAAIDDITFPGTDPDVRTRLEEREKTEGAGALFDELRAKDPEAAARMDPRNPRRTIRALEVIELTGKPYSASLPRYRYVIPSVQIGLDLDRPDLDHRIDLRTKQMYDDGFIEEVERLRPHLGATAVRALGYQQIIDLLDGIWDVNDAFADIAQKTKRLARKQMGWFGRDPRIHWLQALNPKLVDNAMAIIAHADAGDYDSIDARADEYTQHHLGDITA.

10–17 (GPTASGKT) is a binding site for ATP. Position 12–17 (12–17 (TASGKT)) interacts with substrate.

Belongs to the IPP transferase family. As to quaternary structure, monomer. Requires Mg(2+) as cofactor.

It carries out the reaction adenosine(37) in tRNA + dimethylallyl diphosphate = N(6)-dimethylallyladenosine(37) in tRNA + diphosphate. Functionally, catalyzes the transfer of a dimethylallyl group onto the adenine at position 37 in tRNAs that read codons beginning with uridine, leading to the formation of N6-(dimethylallyl)adenosine (i(6)A). The polypeptide is tRNA dimethylallyltransferase (Bifidobacterium longum subsp. infantis (strain ATCC 15697 / DSM 20088 / JCM 1222 / NCTC 11817 / S12)).